A 430-amino-acid polypeptide reads, in one-letter code: Asparagine--tRNA ligase (430 aa).

Belongs to the class-II aminoacyl-tRNA synthetase family. As to quaternary structure, homodimer.

Its subcellular location is the cytoplasm. The catalysed reaction is tRNA(Asn) + L-asparagine + ATP = L-asparaginyl-tRNA(Asn) + AMP + diphosphate + H(+). The polypeptide is Asparagine--tRNA ligase (Oceanobacillus iheyensis (strain DSM 14371 / CIP 107618 / JCM 11309 / KCTC 3954 / HTE831)).